Here is a 970-residue protein sequence, read N- to C-terminus: N-alpha-acetyltransferase 25, NatB auxiliary subunit (970 aa).

4 TPR repeats span residues 11 to 44 (NDRRLRPIYDYLDNGNNKMAIQQADKLLKKHRDL), 45 to 78 (HCAKVLKAIGLQRTGRQEEAFTLAQEVAALEPTD), 79 to 112 (DNSLQALTILYREMHRPELVTKLYEAAVKKVPNS), and 114 to 146 (EYHSHLFMAYARVGEYKKMQQAGMALYKIVPKN).

This sequence belongs to the MDM20/NAA25 family. Component of the N-terminal acetyltransferase B (NatB) complex which is composed of NAA20 and NAA25.

It is found in the cytoplasm. Non-catalytic subunit of the NatB complex which catalyzes acetylation of the N-terminal methionine residues of peptides beginning with Met-Asp, Met-Glu, Met-Asn and Met-Gln. May play a role in normal cell-cycle progression. The protein is N-alpha-acetyltransferase 25, NatB auxiliary subunit (Naa25) of Rattus norvegicus (Rat).